Reading from the N-terminus, the 182-residue chain is Keratin, type II cytoskeletal 60 kDa, component III (182 aa).

The region spanning 1-63 (ERGELALKDA…KLLEGEECRL (63 aa)) is the IF rod domain. Residues 1 to 63 (ERGELALKDA…KLLEGEECRL (63 aa)) form a coil 2 region. The tract at residues 63–182 (LSGEGVGPVN…TSSSRKSFKS (120 aa)) is tail. Residues 157-182 (FGSGGGSSSSVKFVSTTSSSRKSFKS) form a disordered region. Positions 164–182 (SSSVKFVSTTSSSRKSFKS) are enriched in low complexity.

The protein belongs to the intermediate filament family. Heterotetramer of two type I and two type II keratins.

This Bos taurus (Bovine) protein is Keratin, type II cytoskeletal 60 kDa, component III.